Here is a 326-residue protein sequence, read N- to C-terminus: Probable cell division protein WhiA (326 aa).

The segment at residues 275 to 308 (SLDELGRLADPPMTKDAIAGRIRRLLAMADKRAS) is a DNA-binding region (H-T-H motif).

Belongs to the WhiA family.

Involved in cell division and chromosome segregation. The chain is Probable cell division protein WhiA from Renibacterium salmoninarum (strain ATCC 33209 / DSM 20767 / JCM 11484 / NBRC 15589 / NCIMB 2235).